Here is a 194-residue protein sequence, read N- to C-terminus: E3 ubiquitin-protein ligase RNF185 (194 aa).

Positions 1–27 are enriched in low complexity; the sequence is MASAAASESSSSSSSSSAGAANGQSAG. The tract at residues 1–32 is disordered; the sequence is MASAAASESSSSSSSSSAGAANGQSAGESGGG. A required for ubiquitin ligase activity and protection against ER stress-induced cell death region spans residues 31 to 82; that stretch reads GGGAQDSTFECNICLDTSKDAVISLCGHLFCWPCLHQWLETRPNRQVCPVCK. Residues 41–82 form an RING-type zinc finger; sequence CNICLDTSKDAVISLCGHLFCWPCLHQWLETRPNRQVCPVCK. A disordered region spans residues 92 to 126; sequence PLYGRGSTGQQDPREKTPPRPQGQRPEPENRGGFQ. Helical transmembrane passes span 133 to 153 and 174 to 194; these read GGFQ…ATAF and QFLS…LLIA.

Its subcellular location is the mitochondrion outer membrane. The protein localises to the endoplasmic reticulum membrane. The enzyme catalyses S-ubiquitinyl-[E2 ubiquitin-conjugating enzyme]-L-cysteine + [acceptor protein]-L-lysine = [E2 ubiquitin-conjugating enzyme]-L-cysteine + N(6)-ubiquitinyl-[acceptor protein]-L-lysine.. Its pathway is protein modification; protein ubiquitination. Its function is as follows. E3 ubiquitin-protein ligase that regulates selective mitochondrial autophagy by mediating 'Lys-63'-linked polyubiquitination. Acts in the endoplasmic reticulum (ER)-associated degradation (ERAD) pathway, which targets misfolded proteins that accumulate in the endoplasmic reticulum (ER) for ubiquitination and subsequent proteasome-mediated degradation. Protects cells from ER stress-induced apoptosis. Responsible for the cotranslational ubiquitination and degradation of CFTR in the ERAD pathway. Also acts as a regulator of the innate antiviral response by catalyzing 'Lys-27'-linked polyubiquitination of CGAS, thereby promoting CGAS cyclic GMP-AMP synthase activity. Preferentially associates with the E2 enzymes UBE2J1 and UBE2J2. The chain is E3 ubiquitin-protein ligase RNF185 (rnf185) from Danio rerio (Zebrafish).